The primary structure comprises 193 residues: 7-methyl-GTP pyrophosphatase (193 aa).

Asp-69 functions as the Proton acceptor in the catalytic mechanism.

It belongs to the Maf family. YceF subfamily. A divalent metal cation serves as cofactor.

The protein localises to the cytoplasm. It catalyses the reaction N(7)-methyl-GTP + H2O = N(7)-methyl-GMP + diphosphate + H(+). Its function is as follows. Nucleoside triphosphate pyrophosphatase that hydrolyzes 7-methyl-GTP (m(7)GTP). May have a dual role in cell division arrest and in preventing the incorporation of modified nucleotides into cellular nucleic acids. This is 7-methyl-GTP pyrophosphatase from Chromohalobacter salexigens (strain ATCC BAA-138 / DSM 3043 / CIP 106854 / NCIMB 13768 / 1H11).